The primary structure comprises 491 residues: Argininosuccinate lyase (491 aa).

It belongs to the lyase 1 family. Argininosuccinate lyase subfamily.

The protein resides in the cytoplasm. The enzyme catalyses 2-(N(omega)-L-arginino)succinate = fumarate + L-arginine. Its pathway is amino-acid biosynthesis; L-arginine biosynthesis; L-arginine from L-ornithine and carbamoyl phosphate: step 3/3. This Methanosarcina mazei (strain ATCC BAA-159 / DSM 3647 / Goe1 / Go1 / JCM 11833 / OCM 88) (Methanosarcina frisia) protein is Argininosuccinate lyase.